Here is a 141-residue protein sequence, read N- to C-terminus: Zinc finger HIT domain-containing protein 3 (141 aa).

The HIT-type; degenerate zinc finger occupies 1 to 28 (LEKPKYRCPACRVPYCSVACFRKHKEQC). Zn(2+) contacts are provided by Cys8, Cys11, His24, and Cys28. Ser66 carries the phosphoserine modification.

As to quaternary structure, thyroid receptor interacting proteins (TRIPs) specifically interact with the ligand binding domain of the thyroid receptor (TR). Requires the presence of thyroid hormone for its interaction. Interacts with NUFIP1. Interacts (via HIT-type zinc finger) with the RUVBL1/RUVBL2 complex in the presence of ADP.

It is found in the cytoplasm. It localises to the nucleus. The sequence is that of Zinc finger HIT domain-containing protein 3 (ZNHIT3) from Pan troglodytes (Chimpanzee).